The sequence spans 340 residues: Myb-related protein Zm1 (340 aa).

2 HTH myb-type domains span residues 11–63 (KVGL…INYL) and 64–118 (RPDL…KKKV). 2 DNA-binding regions (H-T-H motif) span residues 39 to 63 (WRAL…INYL) and 91 to 114 (WSKI…NTHL). Positions 116-126 (KKVAQREKKKA) are enriched in basic residues. 2 disordered regions span residues 116 to 173 (KKVA…DATD) and 190 to 209 (DGAP…SSLT). Positions 133-166 (AGTPATAPLSSATSSTTTHNSSGGSDSGDQCGTS) are enriched in low complexity.

The protein localises to the nucleus. Its function is as follows. Transcription factor that positively regulates genes involved in anthocyanin biosynthesis such as A1. The chain is Myb-related protein Zm1 from Zea mays (Maize).